The chain runs to 860 residues: DNA mismatch repair protein MutS (860 aa).

607–614 (GPNMSGKS) is a binding site for ATP.

It belongs to the DNA mismatch repair MutS family.

This protein is involved in the repair of mismatches in DNA. It is possible that it carries out the mismatch recognition step. This protein has a weak ATPase activity. This is DNA mismatch repair protein MutS from Listeria welshimeri serovar 6b (strain ATCC 35897 / DSM 20650 / CCUG 15529 / CIP 8149 / NCTC 11857 / SLCC 5334 / V8).